A 650-amino-acid chain; its full sequence is DNA gyrase subunit B (650 aa).

In terms of domain architecture, Toprim spans 429-543; the sequence is NELFIVEGDS…AGYVYIAQPP (115 aa). Residues Glu-435, Asp-508, and Asp-510 each contribute to the Mg(2+) site.

The protein belongs to the type II topoisomerase GyrB family. As to quaternary structure, heterotetramer, composed of two GyrA and two GyrB chains. In the heterotetramer, GyrA contains the active site tyrosine that forms a transient covalent intermediate with DNA, while GyrB binds cofactors and catalyzes ATP hydrolysis. Mg(2+) is required as a cofactor. Mn(2+) serves as cofactor. Requires Ca(2+) as cofactor.

The protein localises to the cytoplasm. The catalysed reaction is ATP-dependent breakage, passage and rejoining of double-stranded DNA.. In terms of biological role, a type II topoisomerase that negatively supercoils closed circular double-stranded (ds) DNA in an ATP-dependent manner to modulate DNA topology and maintain chromosomes in an underwound state. Negative supercoiling favors strand separation, and DNA replication, transcription, recombination and repair, all of which involve strand separation. Also able to catalyze the interconversion of other topological isomers of dsDNA rings, including catenanes and knotted rings. Type II topoisomerases break and join 2 DNA strands simultaneously in an ATP-dependent manner. The protein is DNA gyrase subunit B of Streptococcus pyogenes serotype M3 (strain ATCC BAA-595 / MGAS315).